We begin with the raw amino-acid sequence, 244 residues long: Uridylate kinase (244 aa).

17–20 (KLSG) contacts ATP. Gly59 lines the UMP pocket. 2 residues coordinate ATP: Gly60 and Arg64. UMP is bound by residues Asp79 and 140–147 (TGNPFFTT). Positions 167, 173, and 176 each coordinate ATP.

This sequence belongs to the UMP kinase family. As to quaternary structure, homohexamer.

Its subcellular location is the cytoplasm. The enzyme catalyses UMP + ATP = UDP + ADP. Its pathway is pyrimidine metabolism; CTP biosynthesis via de novo pathway; UDP from UMP (UMPK route): step 1/1. With respect to regulation, inhibited by UTP. In terms of biological role, catalyzes the reversible phosphorylation of UMP to UDP. The sequence is that of Uridylate kinase from Hahella chejuensis (strain KCTC 2396).